A 4022-amino-acid chain; its full sequence is Intermembrane lipid transfer protein VPS13B (4022 aa).

The 101-residue stretch at Leu-2–Ser-102 folds into the Chorein N-terminal domain. The segment at His-100 to Asp-134 is disordered. Over residues Cys-103–Ser-119 the composition is skewed to polar residues. Phosphoserine is present on residues Ser-414, Ser-999, Ser-1002, and Ser-1033. The interval Asn-1247 to Asn-1314 is disordered. 2 stretches are compositionally biased toward polar residues: residues Pro-1264–Asp-1292 and Phe-1302–Asn-1314. Position 1815 is a phosphoserine (Ser-1815). Basic and acidic residues predominate over residues Lys-1860–Lys-1872. Residues Lys-1860–Val-1880 are disordered. The SHR-BD domain maps to His-2631–Gln-2716. The interval Ala-3908–Pro-4022 is localizes the protein to the Golgi apparatus.

This sequence belongs to the VPS13 family. Interacts with STX6. Interacts with STX12. Interacts with RAB6A isoform 1 (GTP-bound) and isoform 2 (GTP-bound). Interacts with RAB6B (GTP-bound). As to expression, widely expressed. There is apparent differential expression of different transcripts. In fetal brain, lung, liver, and kidney, two transcripts of 2 and 5 kb are identified. These transcripts are also seen in all adult tissues analyzed. A larger transcript (12-14 kb) is expressed in prostate, testis, ovary, and colon in the adult. Expression is very low in adult brain tissue. Expressed in peripheral blood lymphocytes. Isoform 1 and isoform 2 are expressed in brain and retina. Isoform 2 is expressed ubiquitously.

The protein localises to the recycling endosome membrane. It localises to the cytoplasmic vesicle. The protein resides in the secretory vesicle. Its subcellular location is the acrosome membrane. It is found in the golgi apparatus. The protein localises to the cis-Golgi network membrane. It localises to the endoplasmic reticulum-Golgi intermediate compartment membrane. The protein resides in the trans-Golgi network membrane. Its subcellular location is the early endosome membrane. It is found in the lysosome membrane. Mediates the transfer of lipids between membranes at organelle contact sites. Binds phosphatidylinositol 3-phosphate. Functions as a tethering factor in the slow endocytic recycling pathway, to assist traffic between early and recycling endosomes. Involved in the transport of proacrosomal vesicles to the nuclear dense lamina (NDL) during spermatid development. Plays a role in the assembly of the Golgi apparatus, possibly by mediating trafficking to the Golgi membrane. Plays a role in the development of the nervous system, and may be required for neuron projection development. May also play a role during adipose tissue development. Required for maintenance of the ocular lens. This Homo sapiens (Human) protein is Intermembrane lipid transfer protein VPS13B (VPS13B).